The following is a 326-amino-acid chain: Protein-ribulosamine 3-kinase, chloroplastic (326 aa).

The N-terminal 30 residues, 1–30 (MAVASLSICFSARPHLLLRNFSPRPKFVAM), are a transit peptide targeting the chloroplast. Residue 125–127 (EFI) coordinates ATP. Aspartate 230 acts as the Proton acceptor in catalysis.

This sequence belongs to the fructosamine kinase family.

It localises to the plastid. It is found in the chloroplast. It catalyses the reaction N(6)-D-ribulosyl-L-lysyl-[protein] + ATP = N(6)-(3-O-phospho-D-ribulosyl)-L-lysyl-[protein] + ADP + H(+). The enzyme catalyses N(6)-(D-erythrulosyl)-L-lysyl-[protein] + ATP = N(6)-(3-O-phospho-D-erythrulosyl)-L-lysyl-[protein] + ADP + H(+). In terms of biological role, initiates a process leading to the deglycation of proteins. Phosphorylates low-molecular-mass and protein-bound erythrulosamines and ribulosamines, but not fructosamines or psicosamines, on the third carbon of the sugar moiety. Protein-bound erythrulosamine 3-phosphates and ribulosamine 3-phosphates are unstable and decompose under physiological conditions. This chain is Protein-ribulosamine 3-kinase, chloroplastic, found in Arabidopsis thaliana (Mouse-ear cress).